The following is a 373-amino-acid chain: Glutamate 5-kinase (373 aa).

ATP is bound at residue Lys15. Residues Ser55, Asp142, and Asn154 each coordinate substrate. ATP is bound by residues 174 to 175 and 216 to 222; these read TD and TGGMATK. In terms of domain architecture, PUA spans 281–359; the sequence is AGSIVVDAGA…SEIERILGFR (79 aa).

The protein belongs to the glutamate 5-kinase family.

It is found in the cytoplasm. It catalyses the reaction L-glutamate + ATP = L-glutamyl 5-phosphate + ADP. Its pathway is amino-acid biosynthesis; L-proline biosynthesis; L-glutamate 5-semialdehyde from L-glutamate: step 1/2. In terms of biological role, catalyzes the transfer of a phosphate group to glutamate to form L-glutamate 5-phosphate. The polypeptide is Glutamate 5-kinase (Geobacter sp. (strain M21)).